We begin with the raw amino-acid sequence, 361 residues long: Chorismate synthase (361 aa).

Residue Arg48 coordinates NADP(+). FMN-binding positions include 125-127 (RSS), 238-239 (NA), Gly278, 293-297 (KPTSS), and Arg319.

This sequence belongs to the chorismate synthase family. In terms of assembly, homotetramer. Requires FMNH2 as cofactor.

It catalyses the reaction 5-O-(1-carboxyvinyl)-3-phosphoshikimate = chorismate + phosphate. Its pathway is metabolic intermediate biosynthesis; chorismate biosynthesis; chorismate from D-erythrose 4-phosphate and phosphoenolpyruvate: step 7/7. Functionally, catalyzes the anti-1,4-elimination of the C-3 phosphate and the C-6 proR hydrogen from 5-enolpyruvylshikimate-3-phosphate (EPSP) to yield chorismate, which is the branch point compound that serves as the starting substrate for the three terminal pathways of aromatic amino acid biosynthesis. This reaction introduces a second double bond into the aromatic ring system. The sequence is that of Chorismate synthase from Aliivibrio fischeri (strain ATCC 700601 / ES114) (Vibrio fischeri).